A 399-amino-acid polypeptide reads, in one-letter code: Guanine nucleotide-binding protein negative regulator 1 (399 aa).

6 WD repeats span residues 44–83, 105–145, 150–194, 207–247, 252–292, and 296–337; these read KPLNFFHSSRWSPDGSTILSLTEDQCLNCWNVPFSDLSKK, YSYS…NKAS, DHQE…VMTT, SLKG…PCQL, ERGN…DMVY, and GHRG…EETH.

As to quaternary structure, interacts with gpa1.

The protein resides in the cytoplasm. Negatively regulates the pheromone-response pathway. Acts as a structural mimic of the G protein beta subunit thereby interacting with gpa1 which then inhibits gpa1 signaling. In Schizosaccharomyces pombe (strain 972 / ATCC 24843) (Fission yeast), this protein is Guanine nucleotide-binding protein negative regulator 1 (gnr1).